A 1938-amino-acid chain; its full sequence is Myosin heavy chain, striated muscle (1938 aa).

Residues 29-79 (DGKKNCWVPDEKEGFASAEIQSSKGDEITVKIVADSSTRTVKKDDIQSMNP) form the Myosin N-terminal SH3-like domain. The 693-residue stretch at 83–775 (EKLEDMANMT…VLGNLEEMRD (693 aa)) folds into the Myosin motor domain. 176–183 (GESGAGKT) contacts ATP. Positions 653-675 (LNKLMKNLYSTHPHFVRCIIPNE) are actin-binding. The IQ domain occupies 778-805 (LSKIISMFQAHIRGYLIRKAYKKLQDQR). Residues 836 to 1938 (LLSIARQEEE…RSSVSVSASN (1103 aa)) are rodlike tail (S2 and LMM domains). Residues 836 to 1938 (LLSIARQEEE…RSSVSVSASN (1103 aa)) are a coiled coil. Basic and acidic residues-rich tracts occupy residues 1041–1058 (VRGD…DLKS) and 1212–1225 (SKLE…KREM). Disordered regions lie at residues 1041 to 1062 (VRGD…TQEN), 1187 to 1332 (SALR…EVRN), 1344 to 1363 (LEEE…KANN), and 1898 to 1938 (HELE…SASN). The segment covering 1265-1285 (RSINELQSQKSRLQAENSDLT) has biased composition (polar residues). 3 stretches are compositionally biased toward basic and acidic residues: residues 1286 to 1303 (RQLE…KEKS), 1310 to 1332 (EDAR…EVRN), and 1344 to 1354 (LEEEQESKSDV). Low complexity predominate over residues 1922-1938 (RSSVSVQRSSVSVSASN).

Belongs to the TRAFAC class myosin-kinesin ATPase superfamily. Myosin family. As to quaternary structure, muscle myosin is a hexameric protein that consists of 2 heavy chain subunits (MHC), 2 alkali light chain subunits (MLC) and 2 regulatory light chain subunits (MLC-2).

The protein localises to the cytoplasm. It is found in the myofibril. In terms of biological role, muscle contraction. Myosin is a protein that binds to F-actin and has ATPase activity that is activated by F-actin. The chain is Myosin heavy chain, striated muscle from Argopecten irradians (Bay scallop).